A 612-amino-acid chain; its full sequence is Baeyer-Villiger monooxygenase 4 (612 aa).

FAD contacts are provided by residues E99, T107–W110, D119, Y125, and A169. Q117–D119 contacts NADP(+). NADP(+) is bound by residues T253–Q259, R276–T277, and K393–R394.

The protein belongs to the FAD-binding monooxygenase family. The cofactor is FAD.

Its function is as follows. Catalyzes a Baeyer-Villiger oxidation reaction, i.e. the insertion of an oxygen atom into a carbon-carbon bond adjacent to a carbonyl, which converts ketones to esters or lactones using NADPH as an electron donor. Has a broad substrate scope and oxidizes different compounds including substituted and unsubstituted alicyclic, bicyclic-, aliphatic-ketones, ketones with an aromatic moiety, and sulfides. The highest activities are measured for 2- and 3-methylcyclohexanone, phenylacetone, bicyclo[3.2.0]hept-2-en-6-one and menthone. Cannot use NADH instead of NADPH. Is not active on benzaldehyde. This chain is Baeyer-Villiger monooxygenase 4, found in Dietzia sp. (strain D5).